We begin with the raw amino-acid sequence, 256 residues long: uncharacterized protein (256 aa).

2 disordered regions span residues 1–171 (MARG…QLKH) and 185–256 (NGQR…LYND). The stretch at 14–39 (KRRSKVQEEEEHVEGSEEEVEEPEQK) forms a coiled coil. Composition is skewed to acidic residues over residues 21–35 (EEEE…EVEE) and 64–92 (SDDD…DNDE). Residues 108-129 (NRGDHESHDDNSDNEEQGDRGN) are compositionally biased toward basic and acidic residues. Residues 192–205 (KRGGPPRGSFGQRG) show a composition bias toward gly residues. Residues 219 to 234 (RQGDTRDTRDTRDTRL) are compositionally biased toward basic and acidic residues.

This is an uncharacterized protein from Acanthamoeba polyphaga (Amoeba).